Here is a 308-residue protein sequence, read N- to C-terminus: Methionyl-tRNA formyltransferase (308 aa).

Serine 109 to proline 112 contacts (6S)-5,6,7,8-tetrahydrofolate.

The protein belongs to the Fmt family.

It carries out the reaction L-methionyl-tRNA(fMet) + (6R)-10-formyltetrahydrofolate = N-formyl-L-methionyl-tRNA(fMet) + (6S)-5,6,7,8-tetrahydrofolate + H(+). Functionally, attaches a formyl group to the free amino group of methionyl-tRNA(fMet). The formyl group appears to play a dual role in the initiator identity of N-formylmethionyl-tRNA by promoting its recognition by IF2 and preventing the misappropriation of this tRNA by the elongation apparatus. The chain is Methionyl-tRNA formyltransferase from Rhizorhabdus wittichii (strain DSM 6014 / CCUG 31198 / JCM 15750 / NBRC 105917 / EY 4224 / RW1) (Sphingomonas wittichii).